A 194-amino-acid polypeptide reads, in one-letter code: Protein GrpE (194 aa).

Polar residues predominate over residues 1–14; sequence MENTQENPTSQNPT. The disordered stretch occupies residues 1–50; sequence MENTQENPTSQNPTPADETARQAAEAAAPQQEAAANAATDSPVNAEQSAL. The span at 21 to 38 shows a compositional bias: low complexity; sequence RQAAEAAAPQQEAAANAA.

It belongs to the GrpE family. As to quaternary structure, homodimer.

The protein localises to the cytoplasm. In terms of biological role, participates actively in the response to hyperosmotic and heat shock by preventing the aggregation of stress-denatured proteins, in association with DnaK and GrpE. It is the nucleotide exchange factor for DnaK and may function as a thermosensor. Unfolded proteins bind initially to DnaJ; upon interaction with the DnaJ-bound protein, DnaK hydrolyzes its bound ATP, resulting in the formation of a stable complex. GrpE releases ADP from DnaK; ATP binding to DnaK triggers the release of the substrate protein, thus completing the reaction cycle. Several rounds of ATP-dependent interactions between DnaJ, DnaK and GrpE are required for fully efficient folding. The polypeptide is Protein GrpE (Paraburkholderia phytofirmans (strain DSM 17436 / LMG 22146 / PsJN) (Burkholderia phytofirmans)).